The following is a 259-amino-acid chain: Ribonuclease PH (259 aa).

Phosphate contacts are provided by residues Arg88 and 126–128 (GTR).

This sequence belongs to the RNase PH family. As to quaternary structure, homohexameric ring arranged as a trimer of dimers.

It carries out the reaction tRNA(n+1) + phosphate = tRNA(n) + a ribonucleoside 5'-diphosphate. Phosphorolytic 3'-5' exoribonuclease that plays an important role in tRNA 3'-end maturation. Removes nucleotide residues following the 3'-CCA terminus of tRNAs; can also add nucleotides to the ends of RNA molecules by using nucleoside diphosphates as substrates, but this may not be physiologically important. Probably plays a role in initiation of 16S rRNA degradation (leading to ribosome degradation) during starvation. This Mycolicibacterium paratuberculosis (strain ATCC BAA-968 / K-10) (Mycobacterium paratuberculosis) protein is Ribonuclease PH.